The sequence spans 627 residues: Meiosis-specific transcription factor NDT80 (627 aa).

The NDT80 DNA-binding region spans 28-335 (EEDTPVILTQ…RSPSNYASSQ (308 aa)). Positions 324 to 410 (RGRSPSNYAS…MEASKENEDP (87 aa)) are disordered. 2 stretches are compositionally biased toward polar residues: residues 327–351 (SPSN…SQNS) and 386–401 (SGAS…STPM).

In terms of assembly, binds to DNA as a monomer. In terms of processing, phosphorylated by pachytene checkpoint kinase IME2, but also phosphorylated in an IME2-independent manner. Phosphorylation probably eliminates SUM1-mediated repression and is also required for full transcriptional activation activity. Phosphorylation of the DNA-binding domain by IME2 does not alter DNA binding affinity.

The protein localises to the nucleus. In terms of biological role, transcription factor required for successful completion of meiosis and spore formation. Gets activated after completion of meiotic recombination at the end of prophase I. Recognizes and binds to the middle sporulation element (MSE) 5'-C[AG]CAAA[AT]-3' in the promoter region of stage-specific genes that are required for progression through meiosis and sporulation. Competes for binding to MSE with the transcriptional repressor SUM1, which represses middle sporulation-specific genes during mitosis and early sporulation. This is Meiosis-specific transcription factor NDT80 (NDT80) from Saccharomyces cerevisiae (strain ATCC 204508 / S288c) (Baker's yeast).